A 244-amino-acid polypeptide reads, in one-letter code: Cytochrome c1 (244 aa).

Residues 1 to 19 (MRKLILATFLLLAPTALLA) form the signal peptide. 3 residues coordinate heme c: C50, C53, and H54. The chain crosses the membrane as a helical span at residues 220-240 (YVLLFLGFLFILAYLLKKEYW).

The main subunits of complex b-c1 are: cytochrome b, cytochrome c1 and the Rieske protein. Post-translationally, binds 1 heme c group covalently per subunit.

It is found in the cell membrane. Component of the ubiquinol-cytochrome c reductase complex (complex III or cytochrome b-c1 complex), which is a respiratory chain that generates an electrochemical potential coupled to ATP synthesis. c1 functions as an electron donor to cytochrome c. The protein is Cytochrome c1 (petC) of Allochromatium vinosum (strain ATCC 17899 / DSM 180 / NBRC 103801 / NCIMB 10441 / D) (Chromatium vinosum).